Here is a 288-residue protein sequence, read N- to C-terminus: Bis(5'-nucleosyl)-tetraphosphatase, symmetrical (288 aa).

It belongs to the Ap4A hydrolase family.

The enzyme catalyses P(1),P(4)-bis(5'-adenosyl) tetraphosphate + H2O = 2 ADP + 2 H(+). Functionally, hydrolyzes diadenosine 5',5'''-P1,P4-tetraphosphate to yield ADP. The protein is Bis(5'-nucleosyl)-tetraphosphatase, symmetrical of Pseudomonas putida (strain ATCC 700007 / DSM 6899 / JCM 31910 / BCRC 17059 / LMG 24140 / F1).